A 252-amino-acid polypeptide reads, in one-letter code: Adenosylcobinamide-GDP ribazoletransferase (252 aa).

Transmembrane regions (helical) follow at residues 34–54, 55–75, 113–133, 138–158, 174–194, 198–218, and 230–250; these read GASF…IIYK, LCII…AGIV, YACL…CSIV, LIII…AFIG, IGKW…FFLM, FIYV…FNVF, and LLGA…CVII.

This sequence belongs to the CobS family. It depends on Mg(2+) as a cofactor.

The protein localises to the cell membrane. The enzyme catalyses alpha-ribazole + adenosylcob(III)inamide-GDP = adenosylcob(III)alamin + GMP + H(+). It carries out the reaction alpha-ribazole 5'-phosphate + adenosylcob(III)inamide-GDP = adenosylcob(III)alamin 5'-phosphate + GMP + H(+). Its pathway is cofactor biosynthesis; adenosylcobalamin biosynthesis; adenosylcobalamin from cob(II)yrinate a,c-diamide: step 7/7. Joins adenosylcobinamide-GDP and alpha-ribazole to generate adenosylcobalamin (Ado-cobalamin). Also synthesizes adenosylcobalamin 5'-phosphate from adenosylcobinamide-GDP and alpha-ribazole 5'-phosphate. In Clostridium kluyveri (strain NBRC 12016), this protein is Adenosylcobinamide-GDP ribazoletransferase.